The sequence spans 261 residues: Type II restriction enzyme Sau96I (261 aa).

Monomer.

The enzyme catalyses Endonucleolytic cleavage of DNA to give specific double-stranded fragments with terminal 5'-phosphates.. A P subtype restriction enzyme that recognizes the double-stranded sequence 5'-GGNCC-3' and cleaves after G-1. In Staphylococcus aureus, this protein is Type II restriction enzyme Sau96I.